The primary structure comprises 295 residues: Mediator of RNA polymerase II transcription subunit 6 (295 aa).

The disordered stretch occupies residues 211–243; sequence TATAATNGNNAGGGSNKSSVRPTGGANMATVPS. Residue S225 is modified to Phosphoserine.

This sequence belongs to the Mediator complex subunit 6 family. As to quaternary structure, component of the Mediator complex, which is composed of at least 21 subunits that form three structurally distinct submodules. The Mediator head module contains MED6, MED8, MED11, SRB4/MED17, SRB5/MED18, ROX3/MED19, SRB2/MED20 and SRB6/MED22, the middle module contains MED1, MED4, NUT1/MED5, MED7, CSE2/MED9, NUT2/MED10, SRB7/MED21 and SOH1/MED31, and the tail module contains MED2, PGD1/MED3, RGR1/MED14, GAL11/MED15 and SIN4/MED16. The head and the middle modules interact directly with RNA polymerase II, whereas the elongated tail module interacts with gene-specific regulatory proteins. MED6 interacts directly with SRB4/MED17 and SRB7/MED21.

The protein resides in the nucleus. In terms of biological role, component of the Mediator complex, a coactivator involved in the regulated transcription of nearly all RNA polymerase II-dependent genes. Mediator functions as a bridge to convey information from gene-specific regulatory proteins to the basal RNA polymerase II transcription machinery. The Mediator complex, having a compact conformation in its free form, is recruited to promoters by direct interactions with regulatory proteins and serves for the assembly of a functional preinitiation complex with RNA polymerase II and the general transcription factors. The Mediator complex unfolds to an extended conformation and partially surrounds RNA polymerase II, specifically interacting with the unphosphorylated form of the C-terminal domain (CTD) of RNA polymerase II. The Mediator complex dissociates from the RNA polymerase II holoenzyme and stays at the promoter when transcriptional elongation begins. This chain is Mediator of RNA polymerase II transcription subunit 6 (MED6), found in Saccharomyces cerevisiae (strain ATCC 204508 / S288c) (Baker's yeast).